Consider the following 301-residue polypeptide: 33 kDa chaperonin (301 aa).

2 cysteine pairs are disulfide-bonded: Cys240/Cys242 and Cys273/Cys276.

This sequence belongs to the HSP33 family. Post-translationally, under oxidizing conditions two disulfide bonds are formed involving the reactive cysteines. Under reducing conditions zinc is bound to the reactive cysteines and the protein is inactive.

It is found in the cytoplasm. Functionally, redox regulated molecular chaperone. Protects both thermally unfolding and oxidatively damaged proteins from irreversible aggregation. Plays an important role in the bacterial defense system toward oxidative stress. This is 33 kDa chaperonin from Rippkaea orientalis (strain PCC 8801 / RF-1) (Cyanothece sp. (strain PCC 8801)).